The sequence spans 588 residues: Sulfite reductase [NADPH] hemoprotein beta-component (588 aa).

Residues Cys442, Cys448, Cys487, and Cys491 each contribute to the [4Fe-4S] cluster site. Position 491 (Cys491) interacts with siroheme.

This sequence belongs to the nitrite and sulfite reductase 4Fe-4S domain family. Alpha(8)-beta(8). The alpha component is a flavoprotein, the beta component is a hemoprotein. The cofactor is siroheme. [4Fe-4S] cluster serves as cofactor.

It catalyses the reaction hydrogen sulfide + 3 NADP(+) + 3 H2O = sulfite + 3 NADPH + 4 H(+). It functions in the pathway sulfur metabolism; hydrogen sulfide biosynthesis; hydrogen sulfide from sulfite (NADPH route): step 1/1. Component of the sulfite reductase complex that catalyzes the 6-electron reduction of sulfite to sulfide. This is one of several activities required for the biosynthesis of L-cysteine from sulfate. In Actinobacillus pleuropneumoniae serotype 3 (strain JL03), this protein is Sulfite reductase [NADPH] hemoprotein beta-component.